A 131-amino-acid chain; its full sequence is MGINYSTVGEMKEGSYIVIDGEPCRVVEVTKAKTGKHGSAKANIIAVSIFTGAKKTLMAPVDSTVEVPIIEKRMGQVISNVGDKVQIMDLETYETFEIDMPTEEDVASKIKKDAEVEYWEVMGRKKIVRVK.

A Hypusine modification is found at K36.

This sequence belongs to the eIF-5A family.

The protein localises to the cytoplasm. In terms of biological role, functions by promoting the formation of the first peptide bond. This chain is Translation initiation factor 5A (eIF5A), found in Metallosphaera sedula (strain ATCC 51363 / DSM 5348 / JCM 9185 / NBRC 15509 / TH2).